The chain runs to 3317 residues: Cadherin-23 (3317 aa).

A signal peptide spans Met-1–Gly-23. The Extracellular portion of the chain corresponds to Gln-24–Ala-3062. Cadherin domains lie at His-34–Phe-132, His-133–Phe-236, Ile-237–Phe-348, Asn-349–Phe-458, Ser-459–Phe-559, Gln-560–Phe-669, Ser-670–Tyr-782, Lys-777–Phe-888, Gln-889–Phe-993, Phe-994–Phe-1100, Leu-1101–Phe-1206, Gln-1208–Phe-1311, Ser-1312–Phe-1416, Phe-1418–Ile-1525, Ser-1527–Phe-1632, Gln-1633–Phe-1742, Pro-1743–Leu-1849, Leu-1850–Phe-1957, Thr-1958–Phe-2067, Ser-2068–Phe-2172, Leu-2173–Phe-2291, Gly-2295–Phe-2400, Asp-2401–Phe-2507, Ser-2508–Phe-2609, Pro-2612–Phe-2720, Ser-2727–Phe-2844, and Thr-2845–Phe-2973. 2 N-linked (GlcNAc...) asparagine glycosylation sites follow: Asn-155 and Asn-206. 32 N-linked (GlcNAc...) asparagine glycosylation sites follow: Asn-349, Asn-391, Asn-432, Asn-464, Asn-470, Asn-600, Asn-692, Asn-763, Asn-808, Asn-825, Asn-939, Asn-999, Asn-1016, Asn-1169, Asn-1280, Asn-1313, Asn-1471, Asn-1532, Asn-1649, Asn-1665, Asn-1816, Asn-1855, Asn-1887, Asn-1900, Asn-2012, Asn-2048, Asn-2127, Asn-2166, Asn-2193, Asn-2261, Asn-2355, and Asn-2367. N-linked (GlcNAc...) asparagine glycosylation is found at Asn-2576, Asn-2614, Asn-2747, Asn-2806, Asn-2875, Asn-2894, Asn-2939, and Asn-2979. The helical transmembrane segment at Leu-3063–Leu-3083 threads the bilayer. The Cytoplasmic segment spans residues Met-3084 to Leu-3317.

Antiparallel heterodimer with PCDH15. Interacts with USH1C and USH1G.

It localises to the cell membrane. Cadherins are calcium-dependent cell adhesion proteins. They preferentially interact with themselves in a homophilic manner in connecting cells. CDH23 is required for establishing and/or maintaining the proper organization of the stereocilia bundle of hair cells in the cochlea and the vestibule during late embryonic/early postnatal development. It is part of the functional network formed by USH1C, USH1G, CDH23 and MYO7A that mediates mechanotransduction in cochlear hair cells. Required for normal hearing. The sequence is that of Cadherin-23 (Cdh23) from Rattus norvegicus (Rat).